A 123-amino-acid chain; its full sequence is Large ribosomal subunit protein uL18 (123 aa).

The protein belongs to the universal ribosomal protein uL18 family. Part of the 50S ribosomal subunit; part of the 5S rRNA/L5/L18/L25 subcomplex. Contacts the 5S and 23S rRNAs.

In terms of biological role, this is one of the proteins that bind and probably mediate the attachment of the 5S RNA into the large ribosomal subunit, where it forms part of the central protuberance. In Chlamydia pneumoniae (Chlamydophila pneumoniae), this protein is Large ribosomal subunit protein uL18.